Consider the following 415-residue polypeptide: Phosphoribosylamine--glycine ligase (415 aa).

Residues 108–311 form the ATP-grasp domain; sequence KKIMEKYNIP…LMQHIIDLDE (204 aa). ATP is bound at residue 134 to 191; the sequence is IENCEFPVVVKKDGLAAGKGVIIADTIEAARSAIEIMYGDEEEGTVVFETFLEGEEFS. Mg(2+)-binding residues include Glu281 and Asn283.

It belongs to the GARS family. Mg(2+) is required as a cofactor. Mn(2+) serves as cofactor.

The enzyme catalyses 5-phospho-beta-D-ribosylamine + glycine + ATP = N(1)-(5-phospho-beta-D-ribosyl)glycinamide + ADP + phosphate + H(+). The protein operates within purine metabolism; IMP biosynthesis via de novo pathway; N(1)-(5-phospho-D-ribosyl)glycinamide from 5-phospho-alpha-D-ribose 1-diphosphate: step 2/2. This is Phosphoribosylamine--glycine ligase from Staphylococcus aureus (strain MRSA252).